Reading from the N-terminus, the 478-residue chain is Antiviral innate immune response effector IFIT1 (478 aa).

6 TPR repeats span residues valine 52–glutamate 85, leucine 95–leucine 128, isoleucine 141–asparagine 174, isoleucine 183–asparagine 216, tyrosine 218–serine 249, and threonine 251–serine 284. Tryptophan 147 is a binding site for mRNA. Residue glycine 190 participates in RNA binding. RNA-binding residues include lysine 259, histidine 289, glutamine 290, and lysine 336. 4 TPR repeats span residues alanine 305–phenylalanine 339, glutamate 340–valine 373, glutamine 378–serine 412, and leucine 437–phenylalanine 470.

The protein belongs to the IFIT family. In terms of assembly, component of an interferon-dependent multiprotein complex, at least composed of IFIT1, IFIT2 and IFIT3. Interacts (via TPR repeats 1-4) with RPL15. Interacts with STING1/MITA; could disrupt STING1 interaction with MAVS or TBK1, acting as a negative-feedback regulator of virus-triggered signaling. Interacts with EIF3E; this could be an alternative way to inhibit translation. In terms of processing, phosphorylated. Post-translationally, ISGylated.

The protein resides in the cytoplasm. Its function is as follows. Plays a key role in the innate immune response as part of an interferon-dependent multiprotein complex, recognizing and sequestering viral RNAs that lack host-specific 2'-O-methylation at their 5' cap. By distinguishing these RNAs from host mRNAs, inhibits their translation by competing with the translation initiation factor eIF4E. Could also prevent viral replication through its interaction with DNA replication origin-binding protein E1 of several viruses. Causes the translocation of E1 from the nucleus to the cytoplasm and can also inhibit its helicase activity in vitro. Exhibits antiviral activity against many viruses from the Flaviviridae (West Nile virus, Dengue virus, hepatitis C virus), Coronaviridae (human 229E coronavirus, SARS-CoV-2 and SARS-CoV), Poxviridae (vaccinia virus) and Togaviridae (Sindbis virus) families. This Homo sapiens (Human) protein is Antiviral innate immune response effector IFIT1.